The primary structure comprises 202 residues: NADH-quinone oxidoreductase subunit B (202 aa).

Polar residues predominate over residues 1 to 13 (MSSPTTKFSNAAS). Positions 1–32 (MSSPTTKFSNAASSAGGPRVTPAAASILDPRT) are disordered. [4Fe-4S] cluster-binding residues include C81, C82, C146, and C176.

It belongs to the complex I 20 kDa subunit family. As to quaternary structure, NDH-1 is composed of 14 different subunits. Subunits NuoB, C, D, E, F, and G constitute the peripheral sector of the complex. Requires [4Fe-4S] cluster as cofactor.

The protein resides in the cell inner membrane. It carries out the reaction a quinone + NADH + 5 H(+)(in) = a quinol + NAD(+) + 4 H(+)(out). In terms of biological role, NDH-1 shuttles electrons from NADH, via FMN and iron-sulfur (Fe-S) centers, to quinones in the respiratory chain. The immediate electron acceptor for the enzyme in this species is believed to be ubiquinone. Couples the redox reaction to proton translocation (for every two electrons transferred, four hydrogen ions are translocated across the cytoplasmic membrane), and thus conserves the redox energy in a proton gradient. The protein is NADH-quinone oxidoreductase subunit B of Nitrobacter hamburgensis (strain DSM 10229 / NCIMB 13809 / X14).